The primary structure comprises 111 residues: TPR repeat-containing protein associated with Hsp90 (111 aa).

Residue Ser-2 is modified to N-acetylserine. TPR repeat units follow at residues 4–37 (FEKQ…QPQN) and 39–71 (VGYS…TSTA).

Component of the R2TP complex composed at least of RVB1, RVB2, TAH1 and PIH1. Also interacts with HSP90.

It localises to the cytoplasm. It is found in the nucleus. This chain is TPR repeat-containing protein associated with Hsp90 (TAH1), found in Saccharomyces cerevisiae (strain ATCC 204508 / S288c) (Baker's yeast).